The primary structure comprises 199 residues: Recombination protein RecR (199 aa).

Residues 58–73 (CSICNNITDVDPCTYC) form a C4-type zinc finger. The region spanning 81 to 176 (QVICVVEEPT…RVTRIATGVP (96 aa)) is the Toprim domain.

Belongs to the RecR family.

May play a role in DNA repair. It seems to be involved in an RecBC-independent recombinational process of DNA repair. It may act with RecF and RecO. The polypeptide is Recombination protein RecR (Koribacter versatilis (strain Ellin345)).